The following is a 199-amino-acid chain: V-type ATP synthase subunit E (199 aa).

It belongs to the V-ATPase E subunit family.

In terms of biological role, produces ATP from ADP in the presence of a proton gradient across the membrane. This Borrelia garinii subsp. bavariensis (strain ATCC BAA-2496 / DSM 23469 / PBi) (Borreliella bavariensis) protein is V-type ATP synthase subunit E.